We begin with the raw amino-acid sequence, 164 residues long: UPF0114 protein YqhA (164 aa).

3 helical membrane passes run 15–35 (LLAP…LKFF), 53–73 (LILV…LVMV), and 136–156 (LMWY…MGYL).

The protein belongs to the UPF0114 family.

Its subcellular location is the cell membrane. This is UPF0114 protein YqhA from Salmonella dublin (strain CT_02021853).